A 656-amino-acid polypeptide reads, in one-letter code: Broad substrate specificity ATP-binding cassette transporter ABCG2 (656 aa).

Residues 1 to 25 (MSSNSYQVSIPMSKRNTNGLPGSSS) are disordered. The Cytoplasmic portion of the chain corresponds to 1-394 (MSSNSYQVSI…SFKNLLGNPQ (394 aa)). In terms of domain architecture, ABC transporter spans 37 to 286 (LSFHDICYRV…FASIGYNCEP (250 aa)). Residues 80–87 (GPTGGGKS), 184–190 (RGVSGGE), E211, and H243 each bind ATP. In terms of domain architecture, ABC transmembrane type-2 spans 390–652 (LGNPQASVAQ…TIAYLKLLLL (263 aa)). The helical transmembrane segment at 395-415 (ASVAQIIVTIILGLVIGAIFY) threads the bilayer. Residues 416 to 429 (DLKNDPSGIQNRAG) lie on the Extracellular side of the membrane. Residues 430–450 (VLFFLTTNQCFSSVSAVELLV) traverse the membrane as a helical segment. The Cytoplasmic segment spans residues 451-478 (VEKKLFIHEYISGYYRVSSYFFGKLLSD). Residues 479 to 498 (LLPMRMLPSIIFTCITYFLL) form a helical membrane-spanning segment. Residues 499–507 (GLKPAVGSF) are Extracellular-facing. Residues 508–530 (FIMMFTLMMVAYSASSMALAIAA) form a helical membrane-spanning segment. Residues 531-536 (GQSVVS) lie on the Cytoplasmic side of the membrane. A helical membrane pass occupies residues 537 to 557 (VATLLMTISFVFMMIFSGLLV). The Extracellular segment spans residues 558–631 (NLKTVVPWLS…LSAWGLWQNH (74 aa)). A disulfide bond links C593 and C609. N-linked (GlcNAc...) asparagine glycans are attached at residues N597 and N601. Residues 632-652 (VALACMMVIFLTIAYLKLLLL) traverse the membrane as a helical segment. Residues 653-656 (KKYS) are Cytoplasmic-facing.

This sequence belongs to the ABC transporter superfamily. ABCG family. Eye pigment precursor importer (TC 3.A.1.204) subfamily. In terms of assembly, homodimer; disulfide-linked. The minimal functional unit is a homodimer, but the major oligomeric form in plasma membrane is a homotetramer with possibility of higher order oligomerization up to homododecamers. In terms of processing, N-glycosylated. Glycosylation-deficient ABCG2 is normally expressed and functional. Phosphorylated. Phosphorylation may regulate the localization to the plasma membrane, the homooligomerization and therefore, the activity of the transporter. As to expression, high expression in brain, kidney and lung. Also expressed in livere, colon, small intestine, heart, skeletal muscle, spleen, stomach and pancreas.

The protein resides in the cell membrane. The protein localises to the apical cell membrane. It localises to the mitochondrion membrane. The catalysed reaction is ATP + H2O + xenobioticSide 1 = ADP + phosphate + xenobioticSide 2.. The enzyme catalyses urate(in) + ATP + H2O = urate(out) + ADP + phosphate + H(+). It catalyses the reaction indoxyl sulfate(in) + ATP + H2O = indoxyl sulfate(out) + ADP + phosphate + H(+). It carries out the reaction sphing-4-enine 1-phosphate(in) + ATP + H2O = sphing-4-enine 1-phosphate(out) + ADP + phosphate + H(+). The catalysed reaction is estrone 3-sulfate(in) + ATP + H2O = estrone 3-sulfate(out) + ADP + phosphate + H(+). The enzyme catalyses dehydroepiandrosterone 3-sulfate(in) + ATP + H2O = dehydroepiandrosterone 3-sulfate(out) + ADP + phosphate + H(+). It catalyses the reaction 4-methylumbelliferone sulfate(in) + ATP + H2O = 4-methylumbelliferone sulfate(out) + ADP + phosphate + H(+). It carries out the reaction 5,7-dimethyl-2-methylamino-4-(3-pyridylmethyl)-1,3-benzothiazol-6-yl beta-D-glucuronate(in) + ATP + H2O = 5,7-dimethyl-2-methylamino-4-(3-pyridylmethyl)-1,3-benzothiazol-6-yl beta-D-glucuronate(out) + ADP + phosphate + H(+). The catalysed reaction is 4-methylumbelliferone beta-D-glucuronate(in) + ATP + H2O = 4-methylumbelliferone beta-D-glucuronate(out) + ADP + phosphate + H(+). The enzyme catalyses 5,7-dimethyl-2-methylamino-4-(3-pyridylmethyl)-1,3-benzothiazol-6-yl sulfate(in) + ATP + H2O = 5,7-dimethyl-2-methylamino-4-(3-pyridylmethyl)-1,3-benzothiazol-6-yl sulfate(out) + ADP + phosphate + H(+). It catalyses the reaction 17beta-estradiol 17-O-(beta-D-glucuronate)(in) + ATP + H2O = 17beta-estradiol 17-O-(beta-D-glucuronate)(out) + ADP + phosphate + H(+). It carries out the reaction methotrexate(in) + ATP + H2O = methotrexate(out) + ADP + phosphate + H(+). The catalysed reaction is riboflavin(in) + ATP + H2O = riboflavin(out) + ADP + phosphate + H(+). The enzyme catalyses pheophorbide a(in) + ATP + H2O = pheophorbide a(out) + ADP + phosphate + H(+). It catalyses the reaction itaconate(in) + ATP + H2O = itaconate(out) + ADP + phosphate + H(+). In terms of biological role, broad substrate specificity ATP-dependent transporter of the ATP-binding cassette (ABC) family that actively extrudes a wide variety of physiological compounds, dietary toxins and xenobiotics from cells. Involved in porphyrin homeostasis, mediating the export of protoporphyrin IX (PPIX) from both mitochondria to cytosol and cytosol to extracellular space, it also functions in the cellular export of heme. Also mediates the efflux of sphingosine-1-P from cells. Acts as a urate exporter functioning in both renal and extrarenal urate excretion. In kidney, it also functions as a physiological exporter of the uremic toxin indoxyl sulfate. Also involved in the excretion of steroids like estrone 3-sulfate/E1S, 3beta-sulfooxy-androst-5-en-17-one/DHEAS, and other sulfate conjugates. Mediates the secretion of the riboflavin and biotin vitamins into milk. Extrudes pheophorbide a, a phototoxic porphyrin catabolite of chlorophyll, reducing its bioavailability. Plays an important role in the exclusion of xenobiotics from the brain. It confers to cells a resistance to multiple drugs and other xenobiotics including mitoxantrone, pheophorbide, camptothecin, methotrexate, azidothymidine, and the anthracyclines daunorubicin and doxorubicin, through the control of their efflux. In placenta, it limits the penetration of drugs from the maternal plasma into the fetus. May play a role in early stem cell self-renewal by blocking differentiation. In inflammatory macrophages, exports itaconate from the cytosol to the extracellular compartment and limits the activation of TFEB-dependent lysosome biogenesis involved in antibacterial innate immune response. The protein is Broad substrate specificity ATP-binding cassette transporter ABCG2 (ABCG2) of Sus scrofa (Pig).